We begin with the raw amino-acid sequence, 173 residues long: Co-chaperone protein HscB homolog (173 aa).

Residues C5 to I77 enclose the J domain.

The protein belongs to the HscB family. As to quaternary structure, interacts with HscA and stimulates its ATPase activity.

Its function is as follows. Co-chaperone involved in the maturation of iron-sulfur cluster-containing proteins. Seems to help targeting proteins to be folded toward HscA. The sequence is that of Co-chaperone protein HscB homolog from Pseudomonas fluorescens (strain Pf0-1).